We begin with the raw amino-acid sequence, 348 residues long: tRNA N6-adenosine threonylcarbamoyltransferase (348 aa).

Fe cation contacts are provided by H115 and H119. Residues 137-141 (LASGG), D170, G183, and N281 each bind substrate. D309 lines the Fe cation pocket.

The protein belongs to the KAE1 / TsaD family. Fe(2+) is required as a cofactor.

The protein resides in the cytoplasm. It catalyses the reaction L-threonylcarbamoyladenylate + adenosine(37) in tRNA = N(6)-L-threonylcarbamoyladenosine(37) in tRNA + AMP + H(+). Functionally, required for the formation of a threonylcarbamoyl group on adenosine at position 37 (t(6)A37) in tRNAs that read codons beginning with adenine. Is involved in the transfer of the threonylcarbamoyl moiety of threonylcarbamoyl-AMP (TC-AMP) to the N6 group of A37, together with TsaE and TsaB. TsaD likely plays a direct catalytic role in this reaction. In Methylobacterium sp. (strain 4-46), this protein is tRNA N6-adenosine threonylcarbamoyltransferase.